The following is a 313-amino-acid chain: Porphobilinogen deaminase (313 aa).

C242 carries the post-translational modification S-(dipyrrolylmethanemethyl)cysteine.

The protein belongs to the HMBS family. In terms of assembly, monomer. Dipyrromethane is required as a cofactor.

It carries out the reaction 4 porphobilinogen + H2O = hydroxymethylbilane + 4 NH4(+). It functions in the pathway porphyrin-containing compound metabolism; protoporphyrin-IX biosynthesis; coproporphyrinogen-III from 5-aminolevulinate: step 2/4. Functionally, tetrapolymerization of the monopyrrole PBG into the hydroxymethylbilane pre-uroporphyrinogen in several discrete steps. The protein is Porphobilinogen deaminase of Photorhabdus laumondii subsp. laumondii (strain DSM 15139 / CIP 105565 / TT01) (Photorhabdus luminescens subsp. laumondii).